A 76-amino-acid polypeptide reads, in one-letter code: Small ribosomal subunit protein bS18 (76 aa).

This sequence belongs to the bacterial ribosomal protein bS18 family. In terms of assembly, part of the 30S ribosomal subunit. Forms a tight heterodimer with protein bS6.

Its function is as follows. Binds as a heterodimer with protein bS6 to the central domain of the 16S rRNA, where it helps stabilize the platform of the 30S subunit. In Marinobacter nauticus (strain ATCC 700491 / DSM 11845 / VT8) (Marinobacter aquaeolei), this protein is Small ribosomal subunit protein bS18.